The primary structure comprises 220 residues: Putative NAD(P)H nitroreductase SERP2086 (220 aa).

Belongs to the nitroreductase family. It depends on FMN as a cofactor.

This Staphylococcus epidermidis (strain ATCC 35984 / DSM 28319 / BCRC 17069 / CCUG 31568 / BM 3577 / RP62A) protein is Putative NAD(P)H nitroreductase SERP2086.